A 262-amino-acid chain; its full sequence is MESALLLPSLLLVAAYPRGGSPQQEWMQSPPAPSVTSAPFWVRLNPELEAVPPGGSAWLNCSHNCPLPVHSSLRTQLRQGKIVNGSGWVSYQLLDVRAWNSKVRCVVTCAGETREATARITAYKRPRSVILEPPVLVGHKYTLRCYVTHVFPVGFLVVSLRRGGRVIYHESLERFTGSDLANVTLTYVMRAGLNDLWQPLTCHARLNLDGLVVRSSSAPVMLTVLALSPASIALASTSIATLVGILLAVGAVYVRKYLAVQT.

Positions 1-22 are cleaved as a signal peptide; the sequence is MESALLLPSLLLVAAYPRGGSP. The Extracellular portion of the chain corresponds to 23–231; it reads QQEWMQSPPA…LTVLALSPAS (209 aa). Ig-like C2-type domains follow at residues 54 to 116 and 138 to 209; these read GGSA…TREA and GHKY…LNLD. 3 N-linked (GlcNAc...) asparagine glycosylation sites follow: Asn60, Asn84, and Asn182. Disulfide bonds link Cys61–Cys105, Cys61–Cys109, Cys65–Cys109, and Cys145–Cys202. A helical membrane pass occupies residues 232-252; it reads IALASTSIATLVGILLAVGAV. The Cytoplasmic portion of the chain corresponds to 253–262; the sequence is YVRKYLAVQT.

The protein belongs to the immunoglobulin superfamily. ICAM family.

The protein localises to the cell membrane. The protein resides in the secreted. Its function is as follows. Adhesion molecule that binds to leukocyte adhesion LFA-1 protein LFA-1 (integrin alpha-L/beta-2). ICAM4 is also a ligand for alpha-4/beta-1 and alpha-V integrins. Isoform 2 may modulate binding of membrane-associated ICAM4. The polypeptide is Intercellular adhesion molecule 4 (Icam4) (Mus musculus (Mouse)).